A 101-amino-acid polypeptide reads, in one-letter code: Small ribosomal subunit protein uS14 (101 aa).

Belongs to the universal ribosomal protein uS14 family. As to quaternary structure, part of the 30S ribosomal subunit. Contacts proteins S3 and S10.

In terms of biological role, binds 16S rRNA, required for the assembly of 30S particles and may also be responsible for determining the conformation of the 16S rRNA at the A site. The sequence is that of Small ribosomal subunit protein uS14 from Francisella tularensis subsp. holarctica (strain FTNF002-00 / FTA).